A 435-amino-acid chain; its full sequence is Serine--tRNA ligase (435 aa).

238-240 (TAE) provides a ligand contact to L-serine. An ATP-binding site is contributed by 269 to 271 (RKE). E292 provides a ligand contact to L-serine. 356-359 (EISS) contacts ATP. An L-serine-binding site is contributed by S391.

This sequence belongs to the class-II aminoacyl-tRNA synthetase family. Type-1 seryl-tRNA synthetase subfamily. As to quaternary structure, homodimer. The tRNA molecule binds across the dimer.

It is found in the cytoplasm. It catalyses the reaction tRNA(Ser) + L-serine + ATP = L-seryl-tRNA(Ser) + AMP + diphosphate + H(+). The enzyme catalyses tRNA(Sec) + L-serine + ATP = L-seryl-tRNA(Sec) + AMP + diphosphate + H(+). The protein operates within aminoacyl-tRNA biosynthesis; selenocysteinyl-tRNA(Sec) biosynthesis; L-seryl-tRNA(Sec) from L-serine and tRNA(Sec): step 1/1. Its function is as follows. Catalyzes the attachment of serine to tRNA(Ser). Is also able to aminoacylate tRNA(Sec) with serine, to form the misacylated tRNA L-seryl-tRNA(Sec), which will be further converted into selenocysteinyl-tRNA(Sec). The chain is Serine--tRNA ligase from Leuconostoc mesenteroides subsp. mesenteroides (strain ATCC 8293 / DSM 20343 / BCRC 11652 / CCM 1803 / JCM 6124 / NCDO 523 / NBRC 100496 / NCIMB 8023 / NCTC 12954 / NRRL B-1118 / 37Y).